We begin with the raw amino-acid sequence, 1033 residues long: SIT4-associating protein SAP190 (1033 aa).

Disordered regions lie at residues 32 to 82, 147 to 213, 768 to 813, and 828 to 1033; these read DQDD…TTES, PEII…QVET, FGND…HDSG, and ENEE…KEAF. Residues 158–170 are compositionally biased toward basic and acidic residues; it reads ILIERDRKDKKED. A compositionally biased stretch (acidic residues) spans 171-182; that stretch reads AEEGGDSEETTN. Residues 183 to 195 show a composition bias toward basic and acidic residues; the sequence is DSDHDSGDERSVD. At Ser-774 the chain carries Phosphoserine. Acidic residues-rich tracts occupy residues 784-793 and 828-838; these read SEDIIGDTEG and ENEEDYAEYSD. Phosphoserine occurs at positions 857, 862, and 892. The span at 858–879 shows a compositional bias: basic and acidic residues; that stretch reads DDGKSKSAESEFTDKISEHRDG. Positions 909–924 are enriched in polar residues; that stretch reads SRSQPSDPKLQDQNIF. Residues 932 to 944 show a composition bias toward acidic residues; sequence GVGDDDDYMDPND. Position 990 is a phosphothreonine (Thr-990). Ser-991 is subject to Phosphoserine. Residues 1000–1018 show a composition bias toward acidic residues; that stretch reads ISSDEEDSEDEDEENDMGN.

This sequence belongs to the SAPS family. As to quaternary structure, associates with the SIT4 protein phosphatase catalytic subunit in a cell-cycle-dependent manner. Post-translationally, hyperphosphorylated in the absence of SIT4.

The protein localises to the cytoplasm. Functionally, positive regulator of protein phosphatase SIT4. Involved in the general amino acid control (GAAC) response regulated by TOR. Involved in the dephosphorylation of the elongator complex subunit IKI3. The protein is SIT4-associating protein SAP190 (SAP190) of Saccharomyces cerevisiae (strain Lalvin EC1118 / Prise de mousse) (Baker's yeast).